A 724-amino-acid polypeptide reads, in one-letter code: Catalase-peroxidase (724 aa).

The tryptophyl-tyrosyl-methioninium (Trp-Tyr) (with M-252) cross-link spans 98 to 226 (WHSAGSYRLA…LAAVQMGLIY (129 aa)). The active-site Proton acceptor is the H99. The segment at residues 226–252 (YVNPEGVNGKPDPLKTAAQVRTTFARM) is a cross-link (tryptophyl-tyrosyl-methioninium (Tyr-Met) (with W-98)). H267 is a heme b binding site.

It belongs to the peroxidase family. Peroxidase/catalase subfamily. Homodimer or homotetramer. Heme b serves as cofactor. Post-translationally, formation of the three residue Trp-Tyr-Met cross-link is important for the catalase, but not the peroxidase activity of the enzyme.

It catalyses the reaction H2O2 + AH2 = A + 2 H2O. The catalysed reaction is 2 H2O2 = O2 + 2 H2O. Its function is as follows. Bifunctional enzyme with both catalase and broad-spectrum peroxidase activity. This is Catalase-peroxidase from Maricaulis maris (strain MCS10) (Caulobacter maris).